Reading from the N-terminus, the 25-residue chain is Small ribosomal subunit protein eS32 (25 aa).

Positions Met-1–Lys-25 are disordered.

It belongs to the eukaryotic ribosomal protein eS32 family. In terms of assembly, component of the large ribosomal subunit.

The chain is Small ribosomal subunit protein eS32 (rpl41) from Agaricus bisporus (White button mushroom).